The primary structure comprises 357 residues: tRNA/tmRNA (uracil-C(5))-methyltransferase (357 aa).

S-adenosyl-L-methionine contacts are provided by glutamine 180, tyrosine 209, asparagine 214, glutamate 230, and aspartate 290. Cysteine 315 acts as the Nucleophile in catalysis. Glutamate 349 (proton acceptor) is an active-site residue.

The protein belongs to the class I-like SAM-binding methyltransferase superfamily. RNA M5U methyltransferase family. TrmA subfamily.

The enzyme catalyses uridine(54) in tRNA + S-adenosyl-L-methionine = 5-methyluridine(54) in tRNA + S-adenosyl-L-homocysteine + H(+). The catalysed reaction is uridine(341) in tmRNA + S-adenosyl-L-methionine = 5-methyluridine(341) in tmRNA + S-adenosyl-L-homocysteine + H(+). Functionally, dual-specificity methyltransferase that catalyzes the formation of 5-methyluridine at position 54 (m5U54) in all tRNAs, and that of position 341 (m5U341) in tmRNA (transfer-mRNA). In Campylobacter jejuni subsp. jejuni serotype O:23/36 (strain 81-176), this protein is tRNA/tmRNA (uracil-C(5))-methyltransferase.